The following is a 118-amino-acid chain: Basic phospholipase A2 1 (118 aa).

7 cysteine pairs are disulfide-bonded: C11–C72, C26–C117, C28–C44, C43–C98, C50–C91, C60–C84, and C78–C89. Residues Y27, G29, and G31 each coordinate Ca(2+). The active site involves H47. D48 provides a ligand contact to Ca(2+). The active site involves D92.

The protein belongs to the phospholipase A2 family. Group I subfamily. D49 sub-subfamily. It depends on Ca(2+) as a cofactor. Expressed by the venom gland.

The protein resides in the secreted. It catalyses the reaction a 1,2-diacyl-sn-glycero-3-phosphocholine + H2O = a 1-acyl-sn-glycero-3-phosphocholine + a fatty acid + H(+). In terms of biological role, PLA2 catalyzes the calcium-dependent hydrolysis of the 2-acyl groups in 3-sn-phosphoglycerides. This chain is Basic phospholipase A2 1, found in Naja melanoleuca (Forest cobra).